Consider the following 382-residue polypeptide: Transforming growth factor beta-1 proprotein (382 aa).

Residues 1-21 (MEVLWMLLVLLVLHLSSLAMS) form the signal peptide. The segment at 22-65 (LSTCKAVDMEEVRKRRIEAIRGQILSKLKLDKTPDVDSEKMTVP) is straightjacket domain. The interval 66 to 263 (SEAIFLYNST…SMPAERIDTV (198 aa)) is arm domain. N-linked (GlcNAc...) asparagine glycosylation is found at Asn73, Asn123, and Asn166. Residues 218–242 (PTPQAKDIDIEGFPALRGDLASLSS) form a bowtie tail region. The Cell attachment site signature appears at 234-236 (RGD). Intrachain disulfides connect Cys277–Cys286, Cys285–Cys348, Cys314–Cys379, and Cys318–Cys381.

Belongs to the TGF-beta family. Latency-associated peptide: Homodimer; disulfide-linked. Latency-associated peptide: Interacts with Transforming growth factor beta-1 (TGF-beta-1) chain; interaction is non-covalent and maintains (TGF-beta-1) in a latent state; each Latency-associated peptide (LAP) monomer interacts with TGF-beta-1 in the other monomer. Transforming growth factor beta-1: Homodimer; disulfide-linked. Transforming growth factor beta-1: Interacts with TGF-beta receptors (tgfbr1 and tgfbr2), leading to signal transduction. Post-translationally, transforming growth factor beta-1 proprotein: The precursor proprotein is cleaved in the Golgi apparatus to form Transforming growth factor beta-1 (TGF-beta-1) and Latency-associated peptide (LAP) chains, which remain non-covalently linked, rendering TGF-beta-1 inactive.

The protein resides in the secreted. Its subcellular location is the extracellular space. It localises to the extracellular matrix. Transforming growth factor beta-1 proprotein: Precursor of the Latency-associated peptide (LAP) and Transforming growth factor beta-1 (TGF-beta-1) chains, which constitute the regulatory and active subunit of TGF-beta-1, respectively. Its function is as follows. Required to maintain the Transforming growth factor beta-1 (TGF-beta-1) chain in a latent state during storage in extracellular matrix. Associates non-covalently with TGF-beta-1 and regulates its activation via interaction with 'milieu molecules', such as LTBP1, LRRC32/GARP and LRRC33/NRROS, that control activation of TGF-beta-1. Interaction with integrins (ITGAV:ITGB6 or ITGAV:ITGB8) results in distortion of the Latency-associated peptide chain and subsequent release of the active TGF-beta-1. Functionally, transforming growth factor beta-1: Multifunctional protein that regulates the growth and differentiation of various cell types and is involved in various processes, such as normal development, immune function, microglia function and responses to neurodegeneration. Activation into mature form follows different steps: following cleavage of the proprotein in the Golgi apparatus, Latency-associated peptide (LAP) and Transforming growth factor beta-1 (TGF-beta-1) chains remain non-covalently linked rendering TGF-beta-1 inactive during storage in extracellular matrix. At the same time, LAP chain interacts with 'milieu molecules', such as ltbp1, lrrc32/garp and lrrc33/nrros that control activation of TGF-beta-1 and maintain it in a latent state during storage in extracellular milieus. TGF-beta-1 is released from LAP by integrins (ITGAV:ITGB6 or ITGAV:ITGB8): integrin-binding to LAP stabilizes an alternative conformation of the LAP bowtie tail and results in distortion of the LAP chain and subsequent release of the active TGF-beta-1. Once activated following release of LAP, TGF-beta-1 acts by binding to TGF-beta receptors (tgfbr1 and tgfbr2), which transduce signal. While expressed by many cells types, TGF-beta-1 only has a very localized range of action within cell environment thanks to fine regulation of its activation by Latency-associated peptide chain (LAP) and 'milieu molecules'. Plays an important role in bone remodeling: acts as a potent stimulator of osteoblastic bone formation. Can promote either T-helper 17 cells (Th17) or regulatory T-cells (Treg) lineage differentiation in a concentration-dependent manner. Can induce epithelial-to-mesenchymal transition (EMT) and cell migration in various cell types. In Xenopus laevis (African clawed frog), this protein is Transforming growth factor beta-1 proprotein (tgfb1).